The following is a 432-amino-acid chain: Adenylosuccinate synthetase (432 aa).

GTP is bound by residues 12–18 (GDEGKGK) and 40–42 (GHT). Residue aspartate 13 is the Proton acceptor of the active site. 2 residues coordinate Mg(2+): aspartate 13 and glycine 40. IMP-binding positions include 13 to 16 (DEGK), 38 to 41 (NAGH), threonine 132, arginine 146, glutamine 226, threonine 241, and arginine 305. The Proton donor role is filled by histidine 41. 301 to 307 (VVTGRKR) contacts substrate. GTP-binding positions include arginine 307, 333 to 335 (KLD), and 415 to 417 (STS).

This sequence belongs to the adenylosuccinate synthetase family. As to quaternary structure, homodimer. Requires Mg(2+) as cofactor.

It is found in the cytoplasm. It carries out the reaction IMP + L-aspartate + GTP = N(6)-(1,2-dicarboxyethyl)-AMP + GDP + phosphate + 2 H(+). Its pathway is purine metabolism; AMP biosynthesis via de novo pathway; AMP from IMP: step 1/2. Plays an important role in the de novo pathway of purine nucleotide biosynthesis. Catalyzes the first committed step in the biosynthesis of AMP from IMP. This Rhizobium leguminosarum bv. trifolii (strain WSM2304) protein is Adenylosuccinate synthetase.